Here is a 430-residue protein sequence, read N- to C-terminus: Probable acetate kinase (430 aa).

Asn-12 lines the Mg(2+) pocket. Lys-19 is a binding site for ATP. Residue Arg-100 coordinates substrate. Asp-159 (proton donor/acceptor) is an active-site residue. Residue 220–224 participates in ATP binding; sequence HLGSG. Position 416 (Glu-416) interacts with Mg(2+).

This sequence belongs to the acetokinase family. It depends on Mg(2+) as a cofactor.

The enzyme catalyses acetate + ATP = acetyl phosphate + ADP. The protein operates within metabolic intermediate biosynthesis; acetyl-CoA biosynthesis; acetyl-CoA from acetate: step 1/2. This Cryptococcus neoformans var. neoformans serotype D (strain B-3501A) (Filobasidiella neoformans) protein is Probable acetate kinase.